The primary structure comprises 149 residues: Large ribosomal subunit protein bL9 (149 aa).

This sequence belongs to the bacterial ribosomal protein bL9 family.

In terms of biological role, binds to the 23S rRNA. The chain is Large ribosomal subunit protein bL9 from Legionella pneumophila (strain Lens).